The primary structure comprises 396 residues: 1-deoxy-D-xylulose 5-phosphate reductoisomerase (396 aa).

Thr-15, Gly-16, Ser-17, Ile-18, Gly-41, and Asn-129 together coordinate NADPH. Lys-130 provides a ligand contact to 1-deoxy-D-xylulose 5-phosphate. Glu-131 contributes to the NADPH binding site. Asp-155 provides a ligand contact to Mn(2+). 1-deoxy-D-xylulose 5-phosphate contacts are provided by Ser-156, Glu-157, Ser-182, and His-205. Glu-157 provides a ligand contact to Mn(2+). Position 211 (Gly-211) interacts with NADPH. 1-deoxy-D-xylulose 5-phosphate-binding residues include Ser-218, Asn-223, Lys-224, and Glu-227. Position 227 (Glu-227) interacts with Mn(2+).

This sequence belongs to the DXR family. The cofactor is Mg(2+). Mn(2+) is required as a cofactor.

It carries out the reaction 2-C-methyl-D-erythritol 4-phosphate + NADP(+) = 1-deoxy-D-xylulose 5-phosphate + NADPH + H(+). It functions in the pathway isoprenoid biosynthesis; isopentenyl diphosphate biosynthesis via DXP pathway; isopentenyl diphosphate from 1-deoxy-D-xylulose 5-phosphate: step 1/6. Functionally, catalyzes the NADPH-dependent rearrangement and reduction of 1-deoxy-D-xylulose-5-phosphate (DXP) to 2-C-methyl-D-erythritol 4-phosphate (MEP). This Xanthomonas oryzae pv. oryzae (strain MAFF 311018) protein is 1-deoxy-D-xylulose 5-phosphate reductoisomerase.